The following is a 141-amino-acid chain: ATP synthase epsilon chain (141 aa).

This sequence belongs to the ATPase epsilon chain family. In terms of assembly, F-type ATPases have 2 components, CF(1) - the catalytic core - and CF(0) - the membrane proton channel. CF(1) has five subunits: alpha(3), beta(3), gamma(1), delta(1), epsilon(1). CF(0) has three main subunits: a, b and c.

It is found in the cell membrane. Produces ATP from ADP in the presence of a proton gradient across the membrane. This Mycoplasmopsis pulmonis (strain UAB CTIP) (Mycoplasma pulmonis) protein is ATP synthase epsilon chain (atpC).